The primary structure comprises 258 residues: Imidazole glycerol phosphate synthase subunit HisF (258 aa).

Catalysis depends on residues Asp11 and Asp130.

It belongs to the HisA/HisF family. Heterodimer of HisH and HisF.

The protein resides in the cytoplasm. It catalyses the reaction 5-[(5-phospho-1-deoxy-D-ribulos-1-ylimino)methylamino]-1-(5-phospho-beta-D-ribosyl)imidazole-4-carboxamide + L-glutamine = D-erythro-1-(imidazol-4-yl)glycerol 3-phosphate + 5-amino-1-(5-phospho-beta-D-ribosyl)imidazole-4-carboxamide + L-glutamate + H(+). Its pathway is amino-acid biosynthesis; L-histidine biosynthesis; L-histidine from 5-phospho-alpha-D-ribose 1-diphosphate: step 5/9. Its function is as follows. IGPS catalyzes the conversion of PRFAR and glutamine to IGP, AICAR and glutamate. The HisF subunit catalyzes the cyclization activity that produces IGP and AICAR from PRFAR using the ammonia provided by the HisH subunit. This is Imidazole glycerol phosphate synthase subunit HisF from Rhodopseudomonas palustris (strain BisB18).